Consider the following 304-residue polypeptide: E3 ubiquitin-protein ligase CHIP (304 aa).

The span at 1–10 (MKGKEEKEGG) shows a compositional bias: basic and acidic residues. The interval 1–30 (MKGKEEKEGGARLGTGGGGSPDKSPSAQEL) is disordered. Lysine 2 participates in a covalent cross-link: Glycyl lysine isopeptide (Lys-Gly) (interchain with G-Cter in ubiquitin). The segment covering 11–20 (ARLGTGGGGS) has biased composition (gly residues). The residue at position 20 (serine 20) is a Phosphoserine. Residue lysine 23 forms a Glycyl lysine isopeptide (Lys-Gly) (interchain with G-Cter in ubiquitin) linkage. Phosphoserine occurs at positions 24 and 26. TPR repeat units lie at residues 27–60 (AQEL…NPLV), 61–94 (AVYY…DGQS), and 96–128 (KAHF…AKEQ). Residues 102-201 (GQCQLEMESY…GHIRAQQACI (100 aa)) form a required for interaction with MAPK7 region. The tract at residues 143–197 (AKKKRWNSIEERRIHQESELHSYLTRLIAAERERELEECQRNHEGDEDDGHIRAQ) is required for interaction with and ubiquitination of MYOCD. Residues 144-198 (KKKRWNSIEERRIHQESELHSYLTRLIAAERERELEECQRNHEGDEDDGHIRAQQ) are required for interaction with FOXO1. Residues 144–304 (KKKRWNSIEE…ISENGWVEDY (161 aa)) are required for ubiquitination of FOXO1. Serine 150 is subject to Phosphoserine. Residues lysine 222 and lysine 256 each participate in a glycyl lysine isopeptide (Lys-Gly) (interchain with G-Cter in ubiquitin) cross-link. The region spanning 227-301 (DIPDYLCGKI…DAFISENGWV (75 aa)) is the U-box domain. Serine 274 carries the phosphoserine modification.

Homodimer. Interacts with BAG2, and with the E2 ubiquitin conjugating enzymes UBE2D1, UBE2D2 and UBE2D3. Detected in a ternary complex containing STUB1, HSPA1A and HSPBP1. Part of a complex composed of STUB1/CHIP, VCP/p97, CHRNA3, and UBXN2A that modulates the ubiquitination and endoplasmic reticulum-associated degradation (ERAD) of CHRNA3. Within the complex UBXN2A acts as a scaffold protein required for the interaction of CHRNA3 with VCP/p97, this interaction also inhibits CHRNA3 ubiquitination by STUB1/CHIP and subsequently ERAD. Interacts with MKKS. Interacts with DNAAF4. Interacts (via the U-box domain) with the UBE2V2-UBE2N heterodimer; the complex has a specific 'Lys-63'-linked polyubiquitination activity. Interacts (when monoubiquitinated) with ATXN3. Interacts with UBE2W. Interacts with DNAJB6. Interacts with FLCN and HSP90AA1. Interacts with HSP90. Interacts with UBE2N and UBE2V1. Interacts (via TPR repeats) with HSPA8 (via C-terminus). Interacts (via TPR repeats) with HSPA1A (via C-terminus). Interacts with the non-acetylated form of HSPA1A and HSPA1B. Interacts with SMAD3 and HSP90AB1. Interacts with UBE4B. Interacts with PRMT5. Interacts with MYOCD (via C-terminus). Interacts with FOXO1 (when phosphorylated on 'Ser-250'). Interacts with MAPK7/ERK5; the interaction is enhanced in the presence of IGF1 or MAP2K5 and promotes STUB1/CHIP E3 ligase activity. Interacts with and ubiquitinates ESR1; the interaction is promoted in the absence of estradiol (17-beta-estradiol/E2). Interacts with ESR2. Interacts with and ubiquitinates NFATC3; HSPA1A/HSP70 is required as a co-chaperone. In macrophages, interacts with PAQR3; the interaction promotes PPARG poylubiquitination and STUB1-mediated degradation. Component of the chaperone-assisted selective autophagy (CASA) complex consisting of BAG3, HSPA8/HSC70, HSPB8 and STUB1/CHIP. Post-translationally, auto-ubiquitinated; mediated by UBE2D1 and UBE2D2 and enhanced in the presence of MAP2K5. Monoubiquitinated at Lys-2 following cell stress by UBE2W, promoting the interaction with ATXN3. Expressed in the adventitia layer of the carotid artery (at protein level). Expressed in the CA1 region of the hippocampus (at protein level). Expressed in the uterus (at protein level).

It localises to the cytoplasm. It is found in the nucleus. The protein resides in the mitochondrion. It carries out the reaction S-ubiquitinyl-[E2 ubiquitin-conjugating enzyme]-L-cysteine + [acceptor protein]-L-lysine = [E2 ubiquitin-conjugating enzyme]-L-cysteine + N(6)-ubiquitinyl-[acceptor protein]-L-lysine.. It participates in protein modification; protein ubiquitination. Its function is as follows. E3 ubiquitin-protein ligase which targets misfolded chaperone substrates towards proteasomal degradation. Plays a role in the maintenance of mitochondrial morphology and promotes mitophagic removal of dysfunctional mitochondria; thereby acts as a protector against apoptosis in response to cellular stress. Negatively regulates vascular smooth muscle contraction, via degradation of the transcriptional activator MYOCD and subsequent loss of transcription of genes involved in vascular smooth muscle contraction. Promotes survival and proliferation of cardiac smooth muscle cells via ubiquitination and degradation of FOXO1, resulting in subsequent repression of FOXO1-mediated transcription of pro-apoptotic genes. Ubiquitinates ICER-type isoforms of CREM and targets them for proteasomal degradation, thereby acts as a positive effector of MAPK/ERK-mediated inhibition of apoptosis in cardiomyocytes. Inhibits lipopolysaccharide-induced apoptosis and hypertrophy in cardiomyocytes, via ubiquitination and subsequent proteasomal degradation of NFATC3. Collaborates with ATXN3 in the degradation of misfolded chaperone substrates: ATXN3 restricting the length of ubiquitin chain attached to STUB1/CHIP substrates and preventing further chain extension. Ubiquitinates NOS1 in concert with Hsp70 and Hsp40. Modulates the activity of several chaperone complexes, including Hsp70, Hsc70 and Hsp90. Ubiquitinates CHRNA3 targeting it for endoplasmic reticulum-associated degradation in cortical neurons, as part of the STUB1-VCP-UBXN2A complex. Ubiquitinates and promotes ESR1 proteasomal degradation in response to age-related circulating estradiol (17-beta-estradiol/E2) decline, thereby promotes neuronal apoptosis in response to ischemic reperfusion injury. Mediates transfer of non-canonical short ubiquitin chains to HSPA8 that have no effect on HSPA8 degradation. Mediates polyubiquitination of DNA polymerase beta (POLB) at 'Lys-41', 'Lys-61' and 'Lys-81', thereby playing a role in base-excision repair: catalyzes polyubiquitination by amplifying the HUWE1/ARF-BP1-dependent monoubiquitination and leading to POLB-degradation by the proteasome. Mediates polyubiquitination of CYP3A4. Ubiquitinates EPHA2 and may regulate the receptor stability and activity through proteasomal degradation. Acts as a co-chaperone for HSPA1A and HSPA1B chaperone proteins and promotes ubiquitin-mediated protein degradation. Negatively regulates the suppressive function of regulatory T-cells (Treg) during inflammation by mediating the ubiquitination and degradation of FOXP3 in a HSPA1A/B-dependent manner. Catalyzes monoubiquitination of SIRT6, preventing its degradation by the proteasome. Likely mediates polyubiquitination and down-regulates plasma membrane expression of PD-L1/CD274, an immune inhibitory ligand critical for immune tolerance to self and antitumor immunity. Negatively regulates TGF-beta signaling by modulating the basal level of SMAD3 via ubiquitin-mediated degradation. Plays a role in the degradation of TP53. Mediates ubiquitination of RIPK3 leading to its subsequent proteasome-dependent degradation. May regulate myosin assembly in striated muscles together with UBE4B and VCP/p97 by targeting myosin chaperone UNC45B for proteasomal degradation. Ubiquitinates PPARG in macrophages playing a role in M2 macrophages polarization and angiogenesis. In Rattus norvegicus (Rat), this protein is E3 ubiquitin-protein ligase CHIP.